The sequence spans 208 residues: uncharacterized protein (208 aa).

A signal peptide spans 1 to 34; it reads MPSHCRERLPFALHFFAVAYGASLWILGSHGLAA.

This is an uncharacterized protein from Sinorhizobium fredii (strain NBRC 101917 / NGR234).